Here is a 275-residue protein sequence, read N- to C-terminus: Large ribosomal subunit protein uL2 (275 aa).

Residues Ala-224 to Gly-275 are disordered.

It belongs to the universal ribosomal protein uL2 family. As to quaternary structure, part of the 50S ribosomal subunit. Forms a bridge to the 30S subunit in the 70S ribosome.

Its function is as follows. One of the primary rRNA binding proteins. Required for association of the 30S and 50S subunits to form the 70S ribosome, for tRNA binding and peptide bond formation. It has been suggested to have peptidyltransferase activity; this is somewhat controversial. Makes several contacts with the 16S rRNA in the 70S ribosome. This Xanthomonas oryzae pv. oryzae (strain MAFF 311018) protein is Large ribosomal subunit protein uL2.